The sequence spans 419 residues: Multiple organellar RNA editing factor 1, mitochondrial (419 aa).

The N-terminal 60 residues, 1–60, are a transit peptide targeting the mitochondrion; sequence MAMISHRLRRALLTATSYVNRSISSSITPASDFPSVSAAVLKRSVIGRSTEVATRAPARL. The interval 174–401 is disordered; the sequence is KEYGGDKYEN…AGQPGSDQVR (228 aa). Low complexity predominate over residues 237 to 252; the sequence is GPQQGYATPGQGQGTQ. Residues 310–327 show a composition bias toward gly residues; that stretch reads GQGGSGNYSQGPQGGYNQ. Positions 342-356 are enriched in low complexity; sequence GPASGAGNLGPAPGA. Positions 357-367 are enriched in gly residues; sequence GNPGYGQGYSG. Residues 371–401 are compositionally biased toward polar residues; it reads EQNQTFPQADQRNRDWNNNNPAGQPGSDQVR.

Belongs to the MORF family. Homodimer and heterodimer with MORF3. Heterodimers with MORF8/RIP1, MORF4/RIP4 and MORF6/RIP6. Interacts with PCMP-E90/MEF13. Interacts with PCMP-H13/MEF35.

The protein resides in the mitochondrion. Its function is as follows. Involved in organellar RNA editing. Required for the processing of numerous RNA editing sites in mitochondria. Binds to the mitochondrial MEF19 and MEF21 factors, two pentatricopeptide repeat-containing proteins involved in RNA editing. In Arabidopsis thaliana (Mouse-ear cress), this protein is Multiple organellar RNA editing factor 1, mitochondrial.